A 390-amino-acid chain; its full sequence is Homoserine O-acetyltransferase (390 aa).

In terms of domain architecture, AB hydrolase-1 spans 55–366 (NAILINHAFS…ESDCGHDAFL (312 aa)). The Nucleophile role is filled by Ser163. Arg232 is a binding site for substrate. Active-site residues include Asp329 and His362. Asp363 contacts substrate.

The protein belongs to the AB hydrolase superfamily. MetX family. As to quaternary structure, homodimer.

The protein localises to the cytoplasm. The catalysed reaction is L-homoserine + acetyl-CoA = O-acetyl-L-homoserine + CoA. It functions in the pathway amino-acid biosynthesis; L-methionine biosynthesis via de novo pathway; O-acetyl-L-homoserine from L-homoserine: step 1/1. In terms of biological role, transfers an acetyl group from acetyl-CoA to L-homoserine, forming acetyl-L-homoserine. The protein is Homoserine O-acetyltransferase of Desulfotalea psychrophila (strain LSv54 / DSM 12343).